We begin with the raw amino-acid sequence, 464 residues long: GTPase Der (464 aa).

EngA-type G domains follow at residues 3 to 166 and 177 to 350; these read ALVA…PVLE and LQFA…QSAN. GTP contacts are provided by residues 9 to 16, 56 to 60, 118 to 121, 183 to 190, 230 to 234, and 295 to 298; these read GRPNVGKS, DTGGV, NKAE, DTAGI, and NKWD. Positions 351-435 constitute a KH-like domain; that stretch reads SHLPTGELNR…PIALEFRTVK (85 aa).

Belongs to the TRAFAC class TrmE-Era-EngA-EngB-Septin-like GTPase superfamily. EngA (Der) GTPase family. As to quaternary structure, associates with the 50S ribosomal subunit.

Functionally, GTPase that plays an essential role in the late steps of ribosome biogenesis. This Nitrosococcus oceani (strain ATCC 19707 / BCRC 17464 / JCM 30415 / NCIMB 11848 / C-107) protein is GTPase Der.